A 332-amino-acid polypeptide reads, in one-letter code: Galectin-4 (332 aa).

2 Galectin domains span residues 19–150 (YHNP…INFI) and 203–332 (FNGR…YVQI). Residue 265–271 (WGSEERK) coordinates a beta-D-galactoside. At Ser267 the chain carries Phosphoserine.

In terms of assembly, monomer.

Its function is as follows. Galectin that binds lactose and a related range of sugars. May be involved in the assembly of adherens junctions. The sequence is that of Galectin-4 (LGALS4) from Bos taurus (Bovine).